We begin with the raw amino-acid sequence, 242 residues long: Transcription factor TCP17 (242 aa).

Residues 33-91 (GKDRHSKVCTVRGLRDRRIRLSVMTAIQVYDLQERLGLSQPSKVIDWLLEVAKNDVDLL) form the TCP domain.

In terms of assembly, interacts with SPL. In terms of tissue distribution, expressed in cotyledons, particularly in the vascular region, in leaves, roots, stems, buds, flowers and siliques.

The protein resides in the nucleus. In terms of biological role, plays a pivotal role in the control of morphogenesis of shoot organs by negatively regulating the expression of boundary-specific genes such as CUC genes, probably through the induction of miRNA (e.g. miR164). Participates in ovule development. This Arabidopsis thaliana (Mouse-ear cress) protein is Transcription factor TCP17 (TCP17).